The primary structure comprises 343 residues: Uroporphyrinogen decarboxylase (343 aa).

Residues 23-27 (RQAGR), Asp73, Tyr151, Ser206, and His322 contribute to the substrate site.

The protein belongs to the uroporphyrinogen decarboxylase family. As to quaternary structure, homodimer.

The protein localises to the cytoplasm. It carries out the reaction uroporphyrinogen III + 4 H(+) = coproporphyrinogen III + 4 CO2. It participates in porphyrin-containing compound metabolism; protoporphyrin-IX biosynthesis; coproporphyrinogen-III from 5-aminolevulinate: step 4/4. Catalyzes the decarboxylation of four acetate groups of uroporphyrinogen-III to yield coproporphyrinogen-III. This chain is Uroporphyrinogen decarboxylase, found in Granulibacter bethesdensis (strain ATCC BAA-1260 / CGDNIH1).